The chain runs to 155 residues: Small ribosomal subunit protein uS7c (155 aa).

The protein belongs to the universal ribosomal protein uS7 family. In terms of assembly, part of the 30S ribosomal subunit.

The protein localises to the plastid. The protein resides in the chloroplast. Functionally, one of the primary rRNA binding proteins, it binds directly to 16S rRNA where it nucleates assembly of the head domain of the 30S subunit. The polypeptide is Small ribosomal subunit protein uS7c (rps7) (Cedrus deodara (Deodar cedar)).